The primary structure comprises 303 residues: DDRGK domain-containing protein 1 (303 aa).

Residues 1-2 (MD) are Lumenal-facing. The chain crosses the membrane as a helical span at residues 3 to 23 (LILLIGIATALLIILLTLYFL). The Cytoplasmic segment spans residues 24 to 303 (QKRNAPAETK…TPVTASEGGA (280 aa)). 2 disordered regions span residues 31–53 (ETKA…VPRR) and 84–160 (AIDP…AEVE). Over residues 106–160 (LDEKMGAKKRAKMEAKEQKRLQREQELHDREQRKVKEAKEEAERKQQDDLDAEVE) the composition is skewed to basic and acidic residues.

Belongs to the DDRGK1 family. Interacts with Atg9; the interaction is transient.

The protein resides in the endoplasmic reticulum membrane. Its function is as follows. Substrate adapter for ufmylation, the covalent attachment of the ubiquitin-like modifier UFM1 to substrate proteins. Required for ufmylation of Atg9; protects the nervous system during aging, possibly by stabilizing Atg9 and supporting its function. This is DDRGK domain-containing protein 1 from Drosophila grimshawi (Hawaiian fruit fly).